The chain runs to 55 residues: Large ribosomal subunit protein bL33 (55 aa).

This sequence belongs to the bacterial ribosomal protein bL33 family.

This Bradyrhizobium sp. (strain BTAi1 / ATCC BAA-1182) protein is Large ribosomal subunit protein bL33.